The following is a 109-amino-acid chain: Spermidine export protein MdtI (109 aa).

4 helical membrane passes run 6 to 26 (LQHILWLLLAIGLEIIANIWL), 36 to 56 (VYGVASLAAVLAAFSALGQAV), 64 to 84 (AYALWGGFGIAATVAAGWIMF), and 88 to 108 (LNRKGWAGLGLLLVGMVIIKL).

It belongs to the drug/metabolite transporter (DMT) superfamily. Small multidrug resistance (SMR) (TC 2.A.7.1) family. MdtI subfamily. In terms of assembly, forms a complex with MdtJ.

Its subcellular location is the cell inner membrane. In terms of biological role, catalyzes the excretion of spermidine. The chain is Spermidine export protein MdtI (mdtI) from Cronobacter sakazakii (strain ATCC BAA-894) (Enterobacter sakazakii).